A 115-amino-acid polypeptide reads, in one-letter code: Cytochrome c (115 aa).

Positions 26, 29, 30, and 91 each coordinate heme c.

Belongs to the cytochrome c family. Post-translationally, binds 1 heme c group covalently per subunit.

It localises to the mitochondrion intermembrane space. In terms of biological role, electron carrier protein. The oxidized form of the cytochrome c heme group can accept an electron from the heme group of the cytochrome c1 subunit of cytochrome reductase. Cytochrome c then transfers this electron to the cytochrome oxidase complex, the final protein carrier in the mitochondrial electron-transport chain. The protein is Cytochrome c of Theileria annulata.